The chain runs to 599 residues: Spermatogenesis-associated protein 7 (599 aa).

The tract at residues 163–205 is disordered; it reads KSSKVITNGPEKNSSSSPSSVDYAASGPRKLSSGALYGRRPRS. The segment covering 166–175 has biased composition (polar residues); it reads KVITNGPEKN.

Found in a complex with CFAP410, NEK1 and SPATA7. Interacts with NEK1. Interacts with RPGRIP1. Interacts with RPGR. Interacts with NPHP4. Interacts with NPHP1. Interacts with AHI1.

It is found in the cytoplasm. Its subcellular location is the cytoskeleton. It localises to the cilium axoneme. The protein localises to the cilium basal body. The protein resides in the cell projection. It is found in the cilium. Its subcellular location is the photoreceptor outer segment. Functionally, involved in the maintenance of both rod and cone photoreceptor cells. It is required for recruitment and proper localization of RPGRIP1 to the photoreceptor connecting cilium (CC), as well as photoreceptor-specific localization of proximal CC proteins at the distal CC. Maintenance of protein localization at the photoreceptor-specific distal CC is essential for normal microtubule stability and to prevent photoreceptor degeneration. The protein is Spermatogenesis-associated protein 7 (SPATA7) of Homo sapiens (Human).